The chain runs to 481 residues: Coniferyl aldehyde dehydrogenase (481 aa).

Residues Glu221 and Cys255 contribute to the active site.

Belongs to the aldehyde dehydrogenase family. As to quaternary structure, homodimer.

The catalysed reaction is (E)-coniferaldehyde + NADP(+) + H2O = (E)-ferulate + NADPH + 2 H(+). It catalyses the reaction (E)-coniferaldehyde + NAD(+) + H2O = (E)-ferulate + NADH + 2 H(+). Its function is as follows. Catalyzes the NAD(+)-dependent oxidation of coniferyl aldehyde to ferulic acid and which is induced during growth with eugenol as the carbon source. This Pseudomonas sp. (strain HR199 / DSM 7063) protein is Coniferyl aldehyde dehydrogenase (calB).